The primary structure comprises 556 residues: Glutamine--tRNA ligase (556 aa).

A 'HIGH' region motif is present at residues 34-44 (PEPNGFLHIGH). ATP-binding positions include 35–37 (EPN) and 41–47 (HIGHAKA). Aspartate 67 and tyrosine 212 together coordinate L-glutamine. ATP-binding positions include threonine 231, 261-262 (RL), and 269-271 (MSK). The 'KMSKS' region signature appears at 268-272 (LMSKR).

The protein belongs to the class-I aminoacyl-tRNA synthetase family. Monomer.

It localises to the cytoplasm. The enzyme catalyses tRNA(Gln) + L-glutamine + ATP = L-glutaminyl-tRNA(Gln) + AMP + diphosphate. The sequence is that of Glutamine--tRNA ligase from Colwellia psychrerythraea (strain 34H / ATCC BAA-681) (Vibrio psychroerythus).